The following is a 289-amino-acid chain: Bidirectional sugar transporter SWEET10 (289 aa).

At 1 to 5 the chain is on the extracellular side; that stretch reads MAISQ. A helical membrane pass occupies residues 6–26; sequence AVLATVFGILGNIISFFVCLA. Positions 11-96 constitute a MtN3/slv 1 domain; it reads VFGILGNIIS…SLFFFYAPKK (86 aa). Residues 27-43 lie on the Cytoplasmic side of the membrane; the sequence is PIPTFVRIYKRKSSEGY. The helical transmembrane segment at 44-64 threads the bilayer; that stretch reads QSIPYVISLFSAMLWMYYAMI. At 65–70 the chain is on the extracellular side; sequence KKDAMM. A helical membrane pass occupies residues 71 to 91; the sequence is LITINSFAFVVQIVYISLFFF. At 92–103 the chain is on the cytoplasmic side; that stretch reads YAPKKEKTLTVK. A helical membrane pass occupies residues 104 to 124; it reads FVLFVDVLGFGAIFVLTYFII. Over 125–131 the chain is Extracellular; the sequence is HANKRVQ. One can recognise a MtN3/slv 2 domain in the interval 131 to 214; sequence QVLGYICMVF…QMILFLIYKK (84 aa). Residues 132-152 form a helical membrane-spanning segment; that stretch reads VLGYICMVFALSVFVAPLGII. The Cytoplasmic portion of the chain corresponds to 153–165; that stretch reads RKVIKTKSAEFMP. The helical transmembrane segment at 166 to 186 threads the bilayer; the sequence is FGLSFFLTLSAVMWFFYGLLL. Residues 187–190 are Extracellular-facing; the sequence is KDMN. Residues 191–211 traverse the membrane as a helical segment; sequence IALPNVLGFIFGVLQMILFLI. Over 212–289 the chain is Cytoplasmic; the sequence is YKKPGTKVLE…EKEVFLISKN (78 aa).

The protein belongs to the SWEET sugar transporter family. As to quaternary structure, forms heterooligomers with SWEET8.

The protein resides in the cell membrane. Functionally, mediates both low-affinity uptake and efflux of sugar across the plasma membrane. The chain is Bidirectional sugar transporter SWEET10 from Arabidopsis thaliana (Mouse-ear cress).